A 127-amino-acid chain; its full sequence is Copper resistance protein C (127 aa).

The signal sequence occupies residues 1 to 25 (MFAFRSIATTVVMVAASLASASAFA). Cu cation-binding residues include His-26, Met-65, Met-68, Met-71, Met-76, and His-116.

It belongs to the CopC family.

It is found in the periplasm. In terms of biological role, copper-binding protein involved in copper resistance. This chain is Copper resistance protein C, found in Xanthomonas campestris pv. juglandis (Xanthomonas arboricola pv. juglandis).